Consider the following 185-residue polypeptide: Translation initiation factor IF-3 (185 aa).

It belongs to the IF-3 family. Monomer.

It localises to the cytoplasm. In terms of biological role, IF-3 binds to the 30S ribosomal subunit and shifts the equilibrium between 70S ribosomes and their 50S and 30S subunits in favor of the free subunits, thus enhancing the availability of 30S subunits on which protein synthesis initiation begins. This Rickettsia prowazekii (strain Madrid E) protein is Translation initiation factor IF-3.